The primary structure comprises 824 residues: Protein bicaudal D homolog 2 (824 aa).

Ser2 bears the N-acetylserine mark. A coiled-coil region spans residues 20-269 (EWLRAEVKRL…ELSHYMSIND (250 aa)). Residues 25–398 (EVKRLSHELA…RLTENLSALR (374 aa)) are interacts with DYNLL1, DYNC1H1, DYNC1I2, DCTN1 and DCTN2. 3 positions are modified to phosphoserine: Ser190, Ser224, and Ser318. A disordered region spans residues 311 to 330 (LPLDNKTSTPKKEGLAPPSP). Phosphothreonine is present on Thr319. Residues 334–599 (SDLLSELNIS…LLAPEAGRAD (266 aa)) are interaction with KIF5A. Positions 338–537 (SELNISEIQK…VTFSEELANL (200 aa)) form a coiled coil. Residues Ser343 and Ser395 each carry the phosphoserine modification. Disordered regions lie at residues 398–425 (RRLQASKERQTALDNEKDRDSHEDGDYY), 559–622 (EGQG…DPRR), and 804–824 (EQTRRGRAKAAPKTKPATPSL). The span at 402–422 (ASKERQTALDNEKDRDSHEDG) shows a compositional bias: basic and acidic residues. Ser568, Ser574, and Ser582 each carry phosphoserine. The tract at residues 590–824 (LLAPEAGRAD…PKTKPATPSL (235 aa)) is interaction with RANBP2. Thr602 carries the post-translational modification Phosphothreonine. Over residues 604–618 (DSSPSPGSSLPSPLS) the composition is skewed to low complexity. The stretch at 666–808 (DKDKEALMEE…LELDHEQTRR (143 aa)) forms a coiled coil. The interval 666-814 (DKDKEALMEE…QTRRGRAKAA (149 aa)) is interacts with RAB6A. Position 821 is a phosphothreonine (Thr821). Ser823 carries the phosphoserine modification.

The protein belongs to the BicD family. In terms of assembly, part of a tripartite complex with dynein and dynactin, acts an adapter linking the dynein motor complex and dynactin. Interacts with CPNE4 (via VWFA domain). Interacts with RAB6A. Interacts with NEK9. Interacts with DNAI1. Interacts with DYNC1H1. Interacts with RANBP2. Binds preferentially to tyrosinated microtubules than to detyrosinated microtubules. Interacts with DYNLL1, DYNC1I2; DCTN1, DCTN2 and KIF5A. Interacts with KIF1C. Phosphorylated by NEK9 in vitro. Ubiquitous.

It localises to the golgi apparatus. The protein resides in the cytoplasm. Its subcellular location is the cytoskeleton. It is found in the nucleus envelope. The protein localises to the nucleus. It localises to the nuclear pore complex. Acts as an adapter protein linking the dynein motor complex to various cargos and converts dynein from a non-processive to a highly processive motor in the presence of dynactin. Facilitates and stabilizes the interaction between dynein and dynactin and activates dynein processivity (the ability to move along a microtubule for a long distance without falling off the track). Facilitates the binding of RAB6A to the Golgi by stabilizing its GTP-bound form. Regulates coat complex coatomer protein I (COPI)-independent Golgi-endoplasmic reticulum transport via its interaction with RAB6A and recruitment of the dynein-dynactin motor complex. Contributes to nuclear and centrosomal positioning prior to mitotic entry through regulation of both dynein and kinesin-1. During G2 phase of the cell cycle, associates with RANBP2 at the nuclear pores and recruits dynein and dynactin to the nuclear envelope to ensure proper positioning of the nucleus relative to centrosomes prior to the onset of mitosis. This is Protein bicaudal D homolog 2 from Homo sapiens (Human).